The sequence spans 1165 residues: Chitin synthase 3 (1165 aa).

Over 1-170 (MTGLNGDDPD…ETNDTLSFWQ (170 aa)) the chain is Cytoplasmic. 2 disordered regions span residues 19 to 53 (DEES…NNPD) and 74 to 97 (PSST…GSVR). The segment covering 74–92 (PSSTGVNPNATRRSGSLRS) has biased composition (polar residues). Residue K136 forms a Glycyl lysine isopeptide (Lys-Gly) (interchain with G-Cter in ubiquitin) linkage. The helical transmembrane segment at 171 to 191 (MYCYFITFWAPAPILAFCGMP) threads the bilayer. Residues 192-340 (KKERQMAWRE…PNFTVENYAG (149 aa)) are Extracellular-facing. N-linked (GlcNAc...) asparagine glycosylation is found at N303 and N332. A helical membrane pass occupies residues 341 to 354 (WNCHTSKEDRDAFY). Residues 355–452 (GLKSKADVYF…SKTVGCIASD (98 aa)) are Cytoplasmic-facing. A helical membrane pass occupies residues 453-473 (VVLYVSLVFILSVVIIKFIIA). Topologically, residues 474 to 891 (CYFRWTVARK…EYYISHHQAK (418 aa)) are extracellular. S537 is subject to Phosphoserine. Phosphothreonine is present on T538. Residues 892 to 910 (AFESVFGSVTCLPGCFSMY) traverse the membrane as a helical segment. The Cytoplasmic segment spans residues 911 to 1029 (RIKSPKGSDG…SMQFVIGIEL (119 aa)). Residues 1030–1050 (IGTMVLPLAICFTIYVIIFAI) traverse the membrane as a helical segment. The Extracellular segment spans residues 1051–1055 (VSKPT). The helical transmembrane segment at 1056 to 1076 (PVITLVLLAIILGLPGLIVVI) threads the bilayer. Residues 1077–1165 (TATRWSYLWW…RKEESDSFVA (89 aa)) lie on the Cytoplasmic side of the membrane.

Belongs to the chitin synthase family. Class IV subfamily. Homodimer. May form higher order oligomers. Seems to interact with BNI4 and SKT5 which link CHS3 to septins. Post-translationally, glycosylated. In terms of processing, palmitoylated by PFA4; required for proper export from the ER.

The protein localises to the cell membrane. The protein resides in the bud neck. It localises to the cytoplasmic vesicle membrane. It catalyses the reaction [(1-&gt;4)-N-acetyl-beta-D-glucosaminyl](n) + UDP-N-acetyl-alpha-D-glucosamine = [(1-&gt;4)-N-acetyl-beta-D-glucosaminyl](n+1) + UDP + H(+). Functionally, polymerizes chitin, a structural polymer of the cell wall and septum, by transferring the sugar moiety of UDP-GlcNAc to the non-reducing end of the growing chitin polymer. Appears to be responsible for synthesis of the majority of the chitin found in the cell wall periphery. It is involved in the synthesis of the chitin ring that forms in the cell wall just before bud emergence. This ring remains at the base of the bud as the bud grows and ultimately forms part of the bud scar marking the division site on the mother cell. Also catalyzes the synthesis of chitin laid down during mating and spore cell-wall synthesis. The chain is Chitin synthase 3 from Saccharomyces cerevisiae (strain ATCC 204508 / S288c) (Baker's yeast).